Consider the following 166-residue polypeptide: uncharacterized protein (166 aa).

This sequence to B.subtilis YpjQ.

This is an uncharacterized protein from Bacillus subtilis (strain 168).